The sequence spans 512 residues: Bifunctional pantoate ligase/cytidylate kinase (512 aa).

Residues 1–276 (MKLQTSADLQ…CGEARLIDHR (276 aa)) are pantoate--beta-alanine ligase. 27 to 34 (MGALHQGH) lines the ATP pocket. Catalysis depends on histidine 34, which acts as the Proton donor. Residue glutamine 58 participates in (R)-pantoate binding. Glutamine 58 is a binding site for beta-alanine. 147 to 150 (GEKD) is a binding site for ATP. Glutamine 153 provides a ligand contact to (R)-pantoate. ATP contacts are provided by residues leucine 176 and 184–187 (LSSR). Residues 277-512 (VLMSRLPILA…VPVEALNADA (236 aa)) are cytidylate kinase.

The protein in the N-terminal section; belongs to the pantothenate synthetase family. In the C-terminal section; belongs to the cytidylate kinase family. Type 1 subfamily.

Its subcellular location is the cytoplasm. The enzyme catalyses (R)-pantoate + beta-alanine + ATP = (R)-pantothenate + AMP + diphosphate + H(+). It carries out the reaction CMP + ATP = CDP + ADP. The catalysed reaction is dCMP + ATP = dCDP + ADP. It participates in cofactor biosynthesis; (R)-pantothenate biosynthesis; (R)-pantothenate from (R)-pantoate and beta-alanine: step 1/1. Functionally, catalyzes the condensation of pantoate with beta-alanine in an ATP-dependent reaction via a pantoyl-adenylate intermediate. In terms of biological role, catalyzes the transfer of a phosphate group from ATP to either CMP or dCMP to form CDP or dCDP and ADP, respectively. The chain is Bifunctional pantoate ligase/cytidylate kinase from Synechococcus sp. (strain RCC307).